The chain runs to 357 residues: tRNA N6-adenosine threonylcarbamoyltransferase (357 aa).

Fe cation is bound by residues His-120 and His-124. Substrate-binding positions include 143–147 (LVSGG), Asp-176, Gly-189, and Asn-289. Residue Asp-317 coordinates Fe cation.

Belongs to the KAE1 / TsaD family. Fe(2+) is required as a cofactor.

The protein localises to the cytoplasm. The enzyme catalyses L-threonylcarbamoyladenylate + adenosine(37) in tRNA = N(6)-L-threonylcarbamoyladenosine(37) in tRNA + AMP + H(+). In terms of biological role, required for the formation of a threonylcarbamoyl group on adenosine at position 37 (t(6)A37) in tRNAs that read codons beginning with adenine. Is involved in the transfer of the threonylcarbamoyl moiety of threonylcarbamoyl-AMP (TC-AMP) to the N6 group of A37, together with TsaE and TsaB. TsaD likely plays a direct catalytic role in this reaction. In Polynucleobacter asymbioticus (strain DSM 18221 / CIP 109841 / QLW-P1DMWA-1) (Polynucleobacter necessarius subsp. asymbioticus), this protein is tRNA N6-adenosine threonylcarbamoyltransferase.